We begin with the raw amino-acid sequence, 434 residues long: 3-phosphoshikimate 1-carboxyvinyltransferase (434 aa).

3 residues coordinate 3-phosphoshikimate: Lys22, Ser23, and Arg27. Lys22 is a phosphoenolpyruvate binding site. Residues Gly93 and Arg121 each coordinate phosphoenolpyruvate. 3-phosphoshikimate is bound by residues Ser168, Ser169, Gln170, Ser199, Asp320, and Lys347. Gln170 is a binding site for phosphoenolpyruvate. Residue Asp320 is the Proton acceptor of the active site. Positions 351, 394, and 419 each coordinate phosphoenolpyruvate.

Belongs to the EPSP synthase family. In terms of assembly, monomer.

It localises to the cytoplasm. It carries out the reaction 3-phosphoshikimate + phosphoenolpyruvate = 5-O-(1-carboxyvinyl)-3-phosphoshikimate + phosphate. The protein operates within metabolic intermediate biosynthesis; chorismate biosynthesis; chorismate from D-erythrose 4-phosphate and phosphoenolpyruvate: step 6/7. Catalyzes the transfer of the enolpyruvyl moiety of phosphoenolpyruvate (PEP) to the 5-hydroxyl of shikimate-3-phosphate (S3P) to produce enolpyruvyl shikimate-3-phosphate and inorganic phosphate. This is 3-phosphoshikimate 1-carboxyvinyltransferase from Burkholderia orbicola (strain MC0-3).